The sequence spans 164 residues: C-phycoerythrin alpha chain (164 aa).

Residues Cys-82 and Cys-139 each contribute to the (2R,3E)-phycoerythrobilin site.

The protein belongs to the phycobiliprotein family. Heterodimer of an alpha and a beta chain. Contains two covalently linked bilin chromophores.

It localises to the cellular thylakoid membrane. Light-harvesting photosynthetic bile pigment-protein from the phycobiliprotein complex. This Pseudanabaena tenuis (strain PCC 7409) protein is C-phycoerythrin alpha chain (cpeA).